A 652-amino-acid chain; its full sequence is Nucleolar GTP-binding protein 1 (652 aa).

One can recognise an OBG-type G domain in the interval 169–341 (RTIIICGFPN…VKTEACERLL (173 aa)). GTP is bound by residues 175 to 182 (GFPNVGKS), 221 to 225 (DTPGI), and 289 to 292 (NKID). The tract at residues 501 to 521 (RLSSRKNKPVIPRNKQPKVRD) is disordered.

The protein belongs to the TRAFAC class OBG-HflX-like GTPase superfamily. OBG GTPase family. NOG subfamily.

Its subcellular location is the nucleus. The protein resides in the nucleolus. Functionally, involved in the biogenesis of the 60S ribosomal subunit. Required for normal assembly of the mitotic spindle. May be involved in both centrosome-dependent and centrosome-independent spindle assembly programs. Acts as a TP53 repressor, preventing TP53 stabilization and cell cycle arrest. The chain is Nucleolar GTP-binding protein 1 from Drosophila melanogaster (Fruit fly).